A 414-amino-acid chain; its full sequence is CCA-adding enzyme (414 aa).

Glycine 8 and arginine 11 together coordinate ATP. Residues glycine 8 and arginine 11 each coordinate CTP. The Mg(2+) site is built by aspartate 21 and aspartate 23. Arginine 91, arginine 137, and arginine 140 together coordinate ATP. The CTP site is built by arginine 91, arginine 137, and arginine 140.

Belongs to the tRNA nucleotidyltransferase/poly(A) polymerase family. Bacterial CCA-adding enzyme type 2 subfamily. It depends on Mg(2+) as a cofactor.

It catalyses the reaction a tRNA precursor + 2 CTP + ATP = a tRNA with a 3' CCA end + 3 diphosphate. The catalysed reaction is a tRNA with a 3' CCA end + 2 CTP + ATP = a tRNA with a 3' CCACCA end + 3 diphosphate. Functionally, catalyzes the addition and repair of the essential 3'-terminal CCA sequence in tRNAs without using a nucleic acid template. Adds these three nucleotides in the order of C, C, and A to the tRNA nucleotide-73, using CTP and ATP as substrates and producing inorganic pyrophosphate. tRNA 3'-terminal CCA addition is required both for tRNA processing and repair. Also involved in tRNA surveillance by mediating tandem CCA addition to generate a CCACCA at the 3' terminus of unstable tRNAs. While stable tRNAs receive only 3'-terminal CCA, unstable tRNAs are marked with CCACCA and rapidly degraded. In Buchnera aphidicola subsp. Acyrthosiphon pisum (strain Tuc7), this protein is CCA-adding enzyme.